The primary structure comprises 142 residues: UPF0102 protein Synpcc7942_0312 (142 aa).

It belongs to the UPF0102 family.

The sequence is that of UPF0102 protein Synpcc7942_0312 from Synechococcus elongatus (strain ATCC 33912 / PCC 7942 / FACHB-805) (Anacystis nidulans R2).